The following is a 195-amino-acid chain: Granulocyte colony-stimulating factor (195 aa).

A signal peptide spans 1-21 (MKLMVLQLLLWHSALWTVHEA). Cystine bridges form between C57–C63 and C85–C95. O-linked (GalNAc...) threonine glycosylation is present at T154.

It belongs to the IL-6 superfamily. Monomer. O-glycosylated.

It localises to the secreted. Functionally, granulocyte/macrophage colony-stimulating factors are cytokines that act in hematopoiesis by controlling the production, differentiation, and function of 2 related white cell populations of the blood, the granulocytes and the monocytes-macrophages. This CSF induces granulocytes. The protein is Granulocyte colony-stimulating factor (CSF3) of Bos taurus (Bovine).